The chain runs to 2537 residues: Histone-lysine N-methyltransferase SETD2 (2537 aa).

Residues Met1 to Lys12 are compositionally biased toward pro residues. Disordered regions lie at residues Met1–Ala31, Thr91–Arg142, Pro156–Arg483, Tyr510–Arg554, and Ser607–Lys629. Basic and acidic residues predominate over residues Asp18 to Ala31. Positions Thr91–Asn103 are enriched in polar residues. Position 132 is a phosphoserine (Ser132). The span at Pro156–Ser166 shows a compositional bias: low complexity. Positions Pro187 to Pro205 are enriched in pro residues. Ser242 is modified (phosphoserine). A compositionally biased stretch (basic and acidic residues) spans Leu264 to Glu291. 3 positions are modified to phosphoserine: Ser322, Ser324, and Ser345. Composition is skewed to basic and acidic residues over residues Arg336–Arg401, Arg422–Arg433, Pro440–Lys468, and Tyr510–Lys528. A Glycyl lysine isopeptide (Lys-Gly) (interchain with G-Cter in SUMO2) cross-link involves residue Lys360. Phosphoserine is present on Ser423. Phosphoserine occurs at positions 532, 614, and 624. Over residues Gly613–Pro625 the composition is skewed to polar residues. Thr626 is modified (phosphothreonine). Position 633 is a phosphoserine (Ser633). A Glycyl lysine isopeptide (Lys-Gly) (interchain with G-Cter in SUMO2) cross-link involves residue Lys637. Phosphoserine occurs at positions 697, 707, 743, and 753. A disordered region spans residues Arg729–Glu749. Lys775 is covalently cross-linked (Glycyl lysine isopeptide (Lys-Gly) (interchain with G-Cter in SUMO2)). Disordered stretches follow at residues Cys829–Asp894, Gln941–Asp974, Glu1015–Asp1078, and Ala1135–Pro1185. The segment covering Asp830–Lys847 has biased composition (basic and acidic residues). Polar residues predominate over residues Ser849 to His858. Over residues Pro867–Ile883 the composition is skewed to low complexity. Residues Leu951 to Asp974 show a composition bias toward basic and acidic residues. Positions Asp1026–Asp1037 are enriched in acidic residues. Ser1077 bears the Phosphoserine mark. Residues Ser1150–Arg1165 show a composition bias toward basic and acidic residues. Position 1201 is a phosphoserine (Ser1201). Disordered stretches follow at residues Gly1232–Thr1254, Trp1280–Ile1346, and Asn1366–Gln1396. Composition is skewed to polar residues over residues Phe1235–Thr1254 and Arg1319–Asn1329. Residues Asn1366–Pro1377 are compositionally biased toward basic and acidic residues. 3 positions are modified to phosphoserine: Ser1387, Ser1389, and Ser1391. Positions Asp1392–Ser1688 are interaction with TUBA1A. Residues Ile1468–Gln1522 form the AWS domain. The Zn(2+) site is built by Cys1473, Cys1475, Cys1490, Cys1494, Cys1503, Cys1507, and Cys1513. An SET domain is found at Ala1524–Gln1641. S-adenosyl-L-methionine-binding positions include Lys1534–Trp1536, His1577–Tyr1579, and Asn1602–His1603. Residue Cys1605 participates in Zn(2+) binding. The region spanning Glu1648–Gly1664 is the Post-SET domain. S-adenosyl-L-methionine is bound at residue Gln1650. Residue Cys1652 coordinates Zn(2+). An S-adenosyl-L-methionine-binding site is contributed by Phe1653. Positions 1654 and 1659 each coordinate Zn(2+). Phosphoserine is present on residues Ser1670, Ser1818, and Ser1819. Residues Thr1806 to Lys1848 form a disordered region. Residues Ser1818–Asp1833 show a composition bias toward polar residues. Phosphothreonine occurs at positions 1827 and 1846. Phosphoserine occurs at positions 1862 and 1926. Disordered regions lie at residues Ser1914–Asp1981 and Leu1993–Gln2110. A compositionally biased stretch (basic and acidic residues) spans Thr1934–Glu1946. A compositionally biased stretch (acidic residues) spans Thr1947–Val1964. Phosphoserine is present on residues Ser1954, Ser1962, and Ser1969. Composition is skewed to basic and acidic residues over residues Glu1965–Asp1978, Leu1993–Ala2020, and Arg2032–Lys2045. Phosphoserine occurs at positions 2053 and 2055. 2 stretches are compositionally biased toward basic and acidic residues: residues Arg2063–Asp2073 and Lys2084–Gln2108. Residues Ser2090–Met2119 adopt a coiled-coil conformation. Residues Gln2110–Pro2339 are low charge region. The region spanning Ile2362–Trp2395 is the WW domain. The tract at residues Leu2412–Glu2438 is disordered. Positions Thr2430–Glu2537 are interaction with POLR2A.

Belongs to the class V-like SAM-binding methyltransferase superfamily. Histone-lysine methyltransferase family. SET2 subfamily. As to quaternary structure, specifically interacts with hyperphosphorylated C-terminal domain (CTD) of RNA polymerase II large subunit (POLR2A): binds to CTD heptad repeats doubly phosphorylated on 'Ser-2' and 'Ser-5' of each heptad. Interacts with HTT. Interacts with IWS1. Interacts with p53/TP53; leading to regulate p53/TP53 target genes. Component of a complex with HNRNPL. Interacts with TUBA1A; the interaction is independent on alpha-tubulin acetylation on 'Lys-40'. In terms of processing, may be automethylated.

The protein resides in the nucleus. Its subcellular location is the chromosome. It catalyses the reaction L-lysyl(36)-[histone H3] + 3 S-adenosyl-L-methionine = N(6),N(6),N(6)-trimethyl-L-lysyl(36)-[histone H3] + 3 S-adenosyl-L-homocysteine + 3 H(+). The enzyme catalyses L-lysyl-[protein] + S-adenosyl-L-methionine = N(6)-methyl-L-lysyl-[protein] + S-adenosyl-L-homocysteine + H(+). The catalysed reaction is L-lysyl-[protein] + 3 S-adenosyl-L-methionine = N(6),N(6),N(6)-trimethyl-L-lysyl-[protein] + 3 S-adenosyl-L-homocysteine + 3 H(+). Its activity is regulated as follows. Specifically inhibited by sinefungin derivatives. Histone methyltransferase that specifically trimethylates 'Lys-36' of histone H3 (H3K36me3) using dimethylated 'Lys-36' (H3K36me2) as substrate. It is capable of trimethylating unmethylated H3K36 (H3K36me0) in vitro. Represents the main enzyme generating H3K36me3, a specific tag for epigenetic transcriptional activation. Plays a role in chromatin structure modulation during elongation by coordinating recruitment of the FACT complex and by interacting with hyperphosphorylated POLR2A. Acts as a key regulator of DNA mismatch repair in G1 and early S phase by generating H3K36me3, a mark required to recruit MSH6 subunit of the MutS alpha complex: early recruitment of the MutS alpha complex to chromatin to be replicated allows a quick identification of mismatch DNA to initiate the mismatch repair reaction. Required for DNA double-strand break repair in response to DNA damage: acts by mediating formation of H3K36me3, promoting recruitment of RAD51 and DNA repair via homologous recombination (HR). Acts as a tumor suppressor. H3K36me3 also plays an essential role in the maintenance of a heterochromatic state, by recruiting DNA methyltransferase DNMT3A. H3K36me3 is also enhanced in intron-containing genes, suggesting that SETD2 recruitment is enhanced by splicing and that splicing is coupled to recruitment of elongating RNA polymerase. Required during angiogenesis. Required for endoderm development by promoting embryonic stem cell differentiation toward endoderm: acts by mediating formation of H3K36me3 in distal promoter regions of FGFR3, leading to regulate transcription initiation of FGFR3. In addition to histones, also mediates methylation of other proteins, such as tubulins and STAT1. Trimethylates 'Lys-40' of alpha-tubulins such as TUBA1B (alpha-TubK40me3); alpha-TubK40me3 is required for normal mitosis and cytokinesis and may be a specific tag in cytoskeletal remodeling. Involved in interferon-alpha-induced antiviral defense by mediating both monomethylation of STAT1 at 'Lys-525' and catalyzing H3K36me3 on promoters of some interferon-stimulated genes (ISGs) to activate gene transcription. This is Histone-lysine N-methyltransferase SETD2 from Mus musculus (Mouse).